The following is a 24-amino-acid chain: Brevinin-1PTb (24 aa).

Cys18 and Cys24 are disulfide-bonded.

In terms of tissue distribution, expressed by the skin glands.

It is found in the secreted. Has antibacterial activity against the Gram-positive bacterium S.aureus ATCC 25923 and the Gram-negative bacterium E.coli ATCC 25726. The sequence is that of Brevinin-1PTb from Pulchrana picturata (Malaysian fire frog).